Reading from the N-terminus, the 416-residue chain is Putative competence-damage inducible protein (416 aa).

The protein belongs to the CinA family.

The protein is Putative competence-damage inducible protein of Levilactobacillus brevis (strain ATCC 367 / BCRC 12310 / CIP 105137 / JCM 1170 / LMG 11437 / NCIMB 947 / NCTC 947) (Lactobacillus brevis).